The chain runs to 597 residues: Elongation factor 4 (597 aa).

Residues 2 to 184 enclose the tr-type G domain; sequence KNIRNFSIIA…TMIAKIPPPV (183 aa). Residues 14-19 and 131-134 each bind GTP; these read DHGKST and NKID.

This sequence belongs to the TRAFAC class translation factor GTPase superfamily. Classic translation factor GTPase family. LepA subfamily.

It is found in the cell inner membrane. The enzyme catalyses GTP + H2O = GDP + phosphate + H(+). Functionally, required for accurate and efficient protein synthesis under certain stress conditions. May act as a fidelity factor of the translation reaction, by catalyzing a one-codon backward translocation of tRNAs on improperly translocated ribosomes. Back-translocation proceeds from a post-translocation (POST) complex to a pre-translocation (PRE) complex, thus giving elongation factor G a second chance to translocate the tRNAs correctly. Binds to ribosomes in a GTP-dependent manner. This Methylobacillus flagellatus (strain ATCC 51484 / DSM 6875 / VKM B-1610 / KT) protein is Elongation factor 4.